A 142-amino-acid polypeptide reads, in one-letter code: Transcriptional regulator MraZ (142 aa).

SpoVT-AbrB domains lie at 5-51 and 77-120; these read SSAL…PRPE and AQDV…DAAS.

The protein belongs to the MraZ family. As to quaternary structure, forms oligomers.

It is found in the cytoplasm. It localises to the nucleoid. The polypeptide is Transcriptional regulator MraZ (Bordetella bronchiseptica (strain ATCC BAA-588 / NCTC 13252 / RB50) (Alcaligenes bronchisepticus)).